The chain runs to 564 residues: Phosphomethylpyrimidine synthase (564 aa).

Substrate contacts are provided by residues N203, M232, Y261, H297, 317–319 (SRG), 358–361 (DGLR), and E397. A Zn(2+)-binding site is contributed by H401. Substrate is bound at residue Y424. Position 465 (H465) interacts with Zn(2+). [4Fe-4S] cluster-binding residues include C541, C544, and C549.

Belongs to the ThiC family. [4Fe-4S] cluster serves as cofactor.

It carries out the reaction 5-amino-1-(5-phospho-beta-D-ribosyl)imidazole + S-adenosyl-L-methionine = 4-amino-2-methyl-5-(phosphooxymethyl)pyrimidine + CO + 5'-deoxyadenosine + formate + L-methionine + 3 H(+). It participates in cofactor biosynthesis; thiamine diphosphate biosynthesis. Its function is as follows. Catalyzes the synthesis of the hydroxymethylpyrimidine phosphate (HMP-P) moiety of thiamine from aminoimidazole ribotide (AIR) in a radical S-adenosyl-L-methionine (SAM)-dependent reaction. This Bacteroides fragilis (strain ATCC 25285 / DSM 2151 / CCUG 4856 / JCM 11019 / LMG 10263 / NCTC 9343 / Onslow / VPI 2553 / EN-2) protein is Phosphomethylpyrimidine synthase.